Consider the following 166-residue polypeptide: Phospholipase A2 inhibitor clone 04 (166 aa).

The signal sequence occupies residues 1–19 (MRLILLSSLLLLGIFLANG). A C-type lectin domain is found at 46–161 (LKDAFLTVHR…CDDNRLVVCE (116 aa)). 2 disulfide bridges follow: cysteine 83-cysteine 160 and cysteine 138-cysteine 152. N-linked (GlcNAc...) asparagine glycosylation is present at asparagine 122.

This sequence belongs to the alpha-type phospholipase A2 inhibitor family. In terms of assembly, homotrimer; non-covalently linked. In terms of tissue distribution, expressed by the liver.

It localises to the secreted. This phospholipase A2 inhibitor binds directly phospholipase A2 in the presence or absence of calcium. The chain is Phospholipase A2 inhibitor clone 04 from Bothrops moojeni (Lance-headed viper).